The chain runs to 304 residues: RNA polymerase II holoenzyme cyclin-like subunit (304 aa).

A Cyclin N-terminal domain is found at 43–174 (TIHDSKANKQ…LIEELQSYLI (132 aa)).

The protein belongs to the cyclin family. Cyclin C subfamily. In terms of assembly, component of the SRB8-11 complex, a regulatory module of the Mediator complex.

Its subcellular location is the nucleus. In terms of biological role, component of the SRB8-11 complex. The SRB8-11 complex is a regulatory module of the Mediator complex which is itself involved in regulation of basal and activated RNA polymerase II-dependent transcription. The SRB8-11 complex may be involved in the transcriptional repression of a subset of genes regulated by Mediator. It may inhibit the association of the Mediator complex with RNA polymerase II to form the holoenzyme complex. The SRB8-11 complex phosphorylates the C-terminal domain (CTD) of the largest subunit of RNA polymerase II. The polypeptide is RNA polymerase II holoenzyme cyclin-like subunit (SSN8) (Kluyveromyces lactis (strain ATCC 8585 / CBS 2359 / DSM 70799 / NBRC 1267 / NRRL Y-1140 / WM37) (Yeast)).